We begin with the raw amino-acid sequence, 969 residues long: UvrABC system protein A (969 aa).

Gly-32–Ser-39 is a binding site for ATP. The C4-type zinc-finger motif lies at Cys-258–Cys-286. ABC transporter domains are found at residues Trp-316–Ile-599 and Val-619–Ala-948. Gly-652 to Ser-659 lines the ATP pocket. A C4-type zinc finger spans residues Cys-751–Cys-777.

This sequence belongs to the ABC transporter superfamily. UvrA family. As to quaternary structure, forms a heterotetramer with UvrB during the search for lesions.

It is found in the cytoplasm. The UvrABC repair system catalyzes the recognition and processing of DNA lesions. UvrA is an ATPase and a DNA-binding protein. A damage recognition complex composed of 2 UvrA and 2 UvrB subunits scans DNA for abnormalities. When the presence of a lesion has been verified by UvrB, the UvrA molecules dissociate. In Mycobacterium leprae (strain TN), this protein is UvrABC system protein A.